Here is a 393-residue protein sequence, read N- to C-terminus: 4-hydroxyphenylpyruvate dioxygenase (393 aa).

The residue at position 2 (T2) is an N-acetylthreonine. VOC domains lie at H18–K149 and I180–K338. At K132 the chain carries N6-succinyllysine. H183 lines the Fe cation pocket. Phosphoserine occurs at positions 211, 226, and 250. Fe cation-binding residues include H266 and E349.

Belongs to the 4HPPD family. Homodimer. It depends on Fe cation as a cofactor.

The protein localises to the cytoplasm. It localises to the endoplasmic reticulum membrane. Its subcellular location is the golgi apparatus membrane. The enzyme catalyses 3-(4-hydroxyphenyl)pyruvate + O2 = homogentisate + CO2. It participates in amino-acid degradation; L-phenylalanine degradation; acetoacetate and fumarate from L-phenylalanine: step 3/6. Catalyzes the conversion of 4-hydroxyphenylpyruvic acid to homogentisic acid, one of the steps in tyrosine catabolism. The chain is 4-hydroxyphenylpyruvate dioxygenase (HPD) from Bos taurus (Bovine).